Here is a 408-residue protein sequence, read N- to C-terminus: Acetate kinase (408 aa).

Residue N10 participates in Mg(2+) binding. K17 contributes to the ATP binding site. Position 96 (R96) interacts with substrate. Residue D153 is the Proton donor/acceptor of the active site. ATP-binding positions include 213-217 and 288-290; these read HLGNG and DLR. Mg(2+) is bound at residue E393.

This sequence belongs to the acetokinase family. In terms of assembly, homodimer. Mg(2+) serves as cofactor. It depends on Mn(2+) as a cofactor.

The protein localises to the cytoplasm. It catalyses the reaction acetate + ATP = acetyl phosphate + ADP. It participates in metabolic intermediate biosynthesis; acetyl-CoA biosynthesis; acetyl-CoA from acetate: step 1/2. In terms of biological role, catalyzes the formation of acetyl phosphate from acetate and ATP. Can also catalyze the reverse reaction. The chain is Acetate kinase from Borrelia duttonii (strain Ly).